An 86-amino-acid polypeptide reads, in one-letter code: Sec-independent protein translocase protein TatA (86 aa).

The helical transmembrane segment at 3-23 threads the bilayer; the sequence is IFGVGLPEVTVILILALLIFG. Positions 56 to 86 are disordered; the sequence is MNEEDESPKSIESNQTNEINQEKIDSENSKK. Polar residues predominate over residues 65–74; sequence SIESNQTNEI. The segment covering 75 to 86 has biased composition (basic and acidic residues); the sequence is NQEKIDSENSKK.

This sequence belongs to the TatA/E family. As to quaternary structure, forms a complex with TatC.

It localises to the cell inner membrane. Part of the twin-arginine translocation (Tat) system that transports large folded proteins containing a characteristic twin-arginine motif in their signal peptide across membranes. TatA could form the protein-conducting channel of the Tat system. In Prochlorococcus marinus (strain MIT 9215), this protein is Sec-independent protein translocase protein TatA.